The chain runs to 412 residues: Adherens junction-associated protein 1 (412 aa).

The first 43 residues, 1 to 43 (MWIQQLLGLSSMSIRWPGRSLGSHAWILIAMLQLAVDFPSCDS), serve as a signal peptide directing secretion. Residues 44–284 (LGPGPEFRLL…GETSGLAVHQ (241 aa)) lie on the Extracellular side of the membrane. Disordered regions lie at residues 62–175 (LWSL…GRPT) and 243–271 (DPWKRTPVGVSTTEPSTSPSSNGKDIQPP). Residues 121-146 (PPAATRSSPSLASATASSSIVTAGAA) show a composition bias toward low complexity. The segment covering 160–171 (HDTEFNDFDFRG) has biased composition (basic and acidic residues). The segment covering 248–263 (TPVGVSTTEPSTSPSS) has biased composition (low complexity). The helical transmembrane segment at 285-305 (IITITVSLIMVIAALITTLVL) threads the bilayer. Residues 305-412 (LKNCCAPSGH…VSEKWFEISC (108 aa)) are targeting signals. At 306-412 (KNCCAPSGHT…VSEKWFEISC (107 aa)) the chain is on the cytoplasmic side.

As to quaternary structure, forms a complex with CDH1 and CTNNB1; interacts directly with CTNNB1. Interacts with AP1M2 and isoform 2 of BSG/CD147.

The protein localises to the basolateral cell membrane. It is found in the apical cell membrane. Its subcellular location is the cell junction. The protein resides in the adherens junction. In terms of biological role, plays a role in cell adhesion and cell migration. This Mus musculus (Mouse) protein is Adherens junction-associated protein 1 (Ajap1).